The following is a 2208-amino-acid chain: Glutamate synthase 1 [NADH], chloroplastic (2208 aa).

Residues 1-49 (MSAASSSSVLHLRTNQQLLSLRSLKNSTSVASQLAVTSGVSRRRSCTAR) constitute a chloroplast transit peptide. Cysteine 117 serves as the catalytic Nucleophile. Residues 117–521 (CGVGFVAELS…PGMMLLVDFE (405 aa)) form the Glutamine amidotransferase type-2 domain. Residues 1040 to 1067 (GKSNTGEGGELPSRMEPLADGSRNPKRS) form a disordered region. 1211–1268 (LAETHQTLVANDLRGRTVLQTDGQLKTGRDVAVAALLGAEEFGFSTAPLITLGCIMMR) is a binding site for FMN. Residues cysteine 1264, cysteine 1270, and cysteine 1275 each coordinate [3Fe-4S] cluster. Residue 1995-2009 (GGGDTGTDCIGTSIR) participates in NAD(+) binding.

Belongs to the glutamate synthase family. In terms of assembly, monomer. Requires [3Fe-4S] cluster as cofactor. FAD is required as a cofactor. The cofactor is FMN. Highly expressed in roots and at low levels in leaves.

The protein localises to the plastid. Its subcellular location is the chloroplast. The catalysed reaction is 2 L-glutamate + NAD(+) = L-glutamine + 2-oxoglutarate + NADH + H(+). Its pathway is amino-acid biosynthesis; L-glutamate biosynthesis via GLT pathway; L-glutamate from 2-oxoglutarate and L-glutamine (NAD(+) route): step 1/1. The protein operates within energy metabolism; nitrogen metabolism. Its function is as follows. Involved in glutamate biosynthesis. Required for non-photorespiratory ammonium assimilation. Probably involved in primary ammonium assimilation in roots. The chain is Glutamate synthase 1 [NADH], chloroplastic (GLT1) from Arabidopsis thaliana (Mouse-ear cress).